We begin with the raw amino-acid sequence, 553 residues long: Putative transport protein YidE (553 aa).

The next 5 membrane-spanning stretches (helical) occupy residues 4–24 (IALTVSVLALVAVVGLWIGNI), 28–48 (GVGFGIGGVLFGGIIVGHFVD), 65–85 (FGLILFVYTIGIQVGPGFFAS), 95–115 (LFAVLIVIMGGLVTAILHKIF), and 158–178 (MSYAMAYPFGICGILLTMWLM). 2 RCK C-terminal domains span residues 192-276 (KHES…VIGK) and 279-361 (DTSL…VVGN). 6 consecutive transmembrane segments (helical) span residues 371–391 (MLPVFIGIGLGVLLGSIPLFV), 393–413 (GFPVALKLGLAGGPLIMALIL), 437–457 (LGIVLFLAVVGLKSGGDFVDT), 464–484 (LSWIGYGIFITAIPLITVGLL), 493–513 (YLTLCGMLAGSMTDPPALAFA), and 533–553 (LVMFLRIITPQLLAVIFWGMG).

The protein belongs to the AAE transporter (TC 2.A.81) family. YidE subfamily.

It localises to the cell membrane. The protein is Putative transport protein YidE of Salmonella heidelberg (strain SL476).